The primary structure comprises 1081 residues: DNA primase (1081 aa).

The segment covering 484–497 (SPNKPQSVHSTPPL) has biased composition (polar residues). The interval 484–508 (SPNKPQSVHSTPPLDQSRGDELSPG) is disordered. The segment at 1024 to 1064 (CLRAKHLRSARGLARTFLSISADVHGRLCASISQQCFATKC) adopts a CHC2-type zinc-finger fold.

The protein belongs to the herpesviridae DNA primase family. As to quaternary structure, associates with the helicase and the primase-associated factor to form the helicase-primase factor.

The protein localises to the host nucleus. Its function is as follows. Essential component of the helicase/primase complex. Unwinds the DNA at the replication forks and generates single-stranded DNA for both leading and lagging strand synthesis. The primase initiates primer synthesis and thereby produces large amount of short RNA primers on the lagging strand that the polymerase elongates using dNTPs. The sequence is that of DNA primase from Equus caballus (Horse).